Here is a 396-residue protein sequence, read N- to C-terminus: Probable peptidoglycan glycosyltransferase FtsW (396 aa).

Topologically, residues 1–27 are cytoplasmic; that stretch reads MPFLDKVKQQYEDWTRITPSNLLYDRA. The chain crosses the membrane as a helical span at residues 28–48; it reads LLLLFFVLLLIGLLAVSSASI. Residues 49–64 are Periplasmic-facing; that stretch reads PVGTRLFKDPFYFAKR. A helical membrane pass occupies residues 65-85; it reads DAIYVFLSCVTCYLCVQVPME. At 86 to 93 the chain is on the cytoplasmic side; that stretch reads KWEQWHVR. Residues 94-114 form a helical membrane-spanning segment; that stretch reads LFAFAIFLLILVLIPGIGLSV. Residues 115 to 122 are Periplasmic-facing; that stretch reads NGARRWIP. A helical membrane pass occupies residues 123-143; it reads MVLFNFQPAEFAKLALTCFLA. Topologically, residues 144-157 are cytoplasmic; the sequence is SYFTRKYDEVRSRK. A helical transmembrane segment spans residues 158–178; sequence LSAFKPFALMGLMGLFLLSQP. At 179 to 183 the chain is on the periplasmic side; it reads DLGST. A run of 2 helical transmembrane segments spans residues 184–204 and 205–225; these read VVLF…FWQF and VGLM…SAYR. The Periplasmic portion of the chain corresponds to 226 to 285; it reads LKRFTGFLDPFKDPYGTGFQLSNSLMAFGRGEWVGEGLGNSIQKLEYLPEAHTDFVMAVV. The helical transmembrane segment at 286–306 threads the bilayer; that stretch reads GEEFGFLGILVIVILLGLLIF. Topologically, residues 307-323 are cytoplasmic; the sequence is RAMKIGRESLLLEQRFK. Residues 324-344 traverse the membrane as a helical segment; sequence GFFAFGISFWIFFQGFVNLGM. Residues 345–355 are Periplasmic-facing; that stretch reads SLGLLPTKGLT. Residues 356 to 376 form a helical membrane-spanning segment; sequence FPLISYGGSSLIIMSMTIGLL. Residues 377–396 are Cytoplasmic-facing; it reads LRIDHENRLMRIGQARLRDD.

The protein belongs to the SEDS family. FtsW subfamily.

Its subcellular location is the cell inner membrane. It carries out the reaction [GlcNAc-(1-&gt;4)-Mur2Ac(oyl-L-Ala-gamma-D-Glu-L-Lys-D-Ala-D-Ala)](n)-di-trans,octa-cis-undecaprenyl diphosphate + beta-D-GlcNAc-(1-&gt;4)-Mur2Ac(oyl-L-Ala-gamma-D-Glu-L-Lys-D-Ala-D-Ala)-di-trans,octa-cis-undecaprenyl diphosphate = [GlcNAc-(1-&gt;4)-Mur2Ac(oyl-L-Ala-gamma-D-Glu-L-Lys-D-Ala-D-Ala)](n+1)-di-trans,octa-cis-undecaprenyl diphosphate + di-trans,octa-cis-undecaprenyl diphosphate + H(+). Its pathway is cell wall biogenesis; peptidoglycan biosynthesis. In terms of biological role, peptidoglycan polymerase that is essential for cell division. The chain is Probable peptidoglycan glycosyltransferase FtsW from Pasteurella multocida (strain Pm70).